Reading from the N-terminus, the 220-residue chain is Chloramphenicol acetyltransferase (220 aa).

Histidine 187 serves as the catalytic Proton acceptor.

It belongs to the chloramphenicol acetyltransferase family. Homotrimer.

It carries out the reaction chloramphenicol + acetyl-CoA = chloramphenicol 3-acetate + CoA. Its function is as follows. This enzyme is an effector of chloramphenicol resistance in bacteria. This Bacillus pumilus (Bacillus mesentericus) protein is Chloramphenicol acetyltransferase (cat86).